We begin with the raw amino-acid sequence, 278 residues long: Troponin T, slow skeletal muscle (278 aa).

Residues 1–37 show a composition bias toward acidic residues; it reads MSDTEEQEYEEEQPEEEAAEEEEEAPEEPEPVAEPEE. Disordered regions lie at residues 1 to 63 and 105 to 153; these read MSDT…RVDF and RRRS…KKKV. At Ser2 the chain carries Phosphoserine; by CK2. Residues 43 to 55 show a composition bias toward pro residues; that stretch reads SRPVVPPLIPPKI. The segment covering 105-149 has biased composition (basic and acidic residues); sequence RRRSERAEQQRFRTEKERERQAKLAEEKMRKEEEEAKKRAEDDAK.

This sequence belongs to the troponin T family. In terms of assembly, interacts with TPM3.

Functionally, troponin T is the tropomyosin-binding subunit of troponin, the thin filament regulatory complex which confers calcium-sensitivity to striated muscle actomyosin ATPase activity. This Homo sapiens (Human) protein is Troponin T, slow skeletal muscle (TNNT1).